Here is a 527-residue protein sequence, read N- to C-terminus: DNA damage-binding protein cmr1 (527 aa).

The segment at 35–90 is disordered; sequence AGLFPPKSARSSPGGLTKPKKKPAPKKVKKEDEDLVPRRMSSRLRGLAADSEVAKR. The span at 52–62 shows a compositional bias: basic residues; the sequence is KPKKKPAPKKV. 7 WD repeats span residues 185–226, 249–289, 296–336, 341–381, 388–427, 450–493, and 496–527; these read LTPE…PISA, PHTR…SVEK, SDDI…RSAV, LSEK…HDEP, VSRLSVSHAAFNSAGQIATSSYDDTLKIYDFGSKGIAAWK, GRWV…LAQL, and DGITAVPAVAVFHRSTNWIAGGTASGKICLWM. The tract at residues 284-303 is disordered; that stretch reads TTSVEKYAPESTSDDIPISG.

It belongs to the WD repeat DDB2/WDR76 family.

DNA-binding protein that binds to both single- and double-stranded DNA. Binds preferentially to UV-damaged DNA. May be involved in DNA-metabolic processes. In Neosartorya fischeri (strain ATCC 1020 / DSM 3700 / CBS 544.65 / FGSC A1164 / JCM 1740 / NRRL 181 / WB 181) (Aspergillus fischerianus), this protein is DNA damage-binding protein cmr1.